The sequence spans 221 residues: Probable transaldolase (221 aa).

Lys-83 serves as the catalytic Schiff-base intermediate with substrate.

Belongs to the transaldolase family. Type 3B subfamily.

It localises to the cytoplasm. The catalysed reaction is D-sedoheptulose 7-phosphate + D-glyceraldehyde 3-phosphate = D-erythrose 4-phosphate + beta-D-fructose 6-phosphate. The protein operates within carbohydrate degradation; pentose phosphate pathway; D-glyceraldehyde 3-phosphate and beta-D-fructose 6-phosphate from D-ribose 5-phosphate and D-xylulose 5-phosphate (non-oxidative stage): step 2/3. Functionally, transaldolase is important for the balance of metabolites in the pentose-phosphate pathway. In Herpetosiphon aurantiacus (strain ATCC 23779 / DSM 785 / 114-95), this protein is Probable transaldolase.